Here is a 397-residue protein sequence, read N- to C-terminus: Serine protease MT3772 (397 aa).

A run of 4 helical transmembrane segments spans residues 9–29, 32–52, 62–82, and 102–122; these read IAVL…GALG, LSFG…PHIV, LFAA…AGVV, and VIGV…LAMP. Residues C214 and C395 are joined by a disulfide bond. The active-site Proton acceptor is H235. Residue D264 is part of the active site. S343 (charge relay system) is an active-site residue.

Belongs to the peptidase S1C family. As to quaternary structure, monomer.

It is found in the membrane. Required for M.tuberculosis resistance to oxidative stress in addition to its role in resistance to acid, which is essential for virulence. This Mycobacterium tuberculosis (strain CDC 1551 / Oshkosh) protein is Serine protease MT3772.